A 361-amino-acid chain; its full sequence is Protein SSUH2 homolog (361 aa).

The protein localises to the cytoplasm. It localises to the nucleus. Plays a role in odontogenesis. The protein is Protein SSUH2 homolog of Danio rerio (Zebrafish).